A 122-amino-acid polypeptide reads, in one-letter code: Large ribosomal subunit protein uL14 (122 aa).

Belongs to the universal ribosomal protein uL14 family. As to quaternary structure, part of the 50S ribosomal subunit. Forms a cluster with proteins L3 and L19. In the 70S ribosome, L14 and L19 interact and together make contacts with the 16S rRNA in bridges B5 and B8.

In terms of biological role, binds to 23S rRNA. Forms part of two intersubunit bridges in the 70S ribosome. This is Large ribosomal subunit protein uL14 from Streptococcus equi subsp. equi (strain 4047).